Consider the following 205-residue polypeptide: Thymidine kinase (205 aa).

ATP is bound by residues 9–16 (SAMNAGKS) and 87–90 (DESQ). Catalysis depends on E88, which acts as the Proton acceptor. 4 residues coordinate Zn(2+): C145, C147, C182, and H185.

This sequence belongs to the thymidine kinase family. Homotetramer.

The protein resides in the cytoplasm. It carries out the reaction thymidine + ATP = dTMP + ADP + H(+). This chain is Thymidine kinase, found in Salmonella choleraesuis (strain SC-B67).